The sequence spans 124 residues: Large ribosomal subunit protein bL12 (124 aa).

The protein belongs to the bacterial ribosomal protein bL12 family. As to quaternary structure, homodimer. Part of the ribosomal stalk of the 50S ribosomal subunit. Forms a multimeric L10(L12)X complex, where L10 forms an elongated spine to which 2 to 4 L12 dimers bind in a sequential fashion. Binds GTP-bound translation factors.

In terms of biological role, forms part of the ribosomal stalk which helps the ribosome interact with GTP-bound translation factors. Is thus essential for accurate translation. In Cereibacter sphaeroides (strain ATCC 17025 / ATH 2.4.3) (Rhodobacter sphaeroides), this protein is Large ribosomal subunit protein bL12.